Here is a 586-residue protein sequence, read N- to C-terminus: uncharacterized protein (586 aa).

Residues 29–312 enclose the ABC transmembrane type-1 domain; it reads YGIAIGSMVV…LARMRISLES (284 aa). 4 helical membrane-spanning segments follow: residues 30-50, 66-86, 162-184, and 256-276; these read GIAI…AWIM, VFGV…ATYV, MVIQ…ILGV, and IMET…GVLV. Positions 346-580 constitute an ABC transporter domain; it reads IRFKDVNFSY…DGVYRRLYEL (235 aa). An ATP-binding site is contributed by 379 to 386; sequence GPSGAGKS.

The protein belongs to the ABC transporter superfamily.

Its subcellular location is the cell membrane. This is an uncharacterized protein from Sinorhizobium fredii (strain NBRC 101917 / NGR234).